We begin with the raw amino-acid sequence, 139 residues long: Putative nickel-responsive regulator (139 aa).

His-79, His-90, His-92, and Cys-98 together coordinate Ni(2+).

Belongs to the transcriptional regulatory CopG/NikR family. Requires Ni(2+) as cofactor.

In terms of biological role, transcriptional regulator. This Trichlorobacter lovleyi (strain ATCC BAA-1151 / DSM 17278 / SZ) (Geobacter lovleyi) protein is Putative nickel-responsive regulator.